We begin with the raw amino-acid sequence, 93 residues long: Putative pterin-4-alpha-carbinolamine dehydratase (93 aa).

It belongs to the pterin-4-alpha-carbinolamine dehydratase family.

It carries out the reaction (4aS,6R)-4a-hydroxy-L-erythro-5,6,7,8-tetrahydrobiopterin = (6R)-L-erythro-6,7-dihydrobiopterin + H2O. The polypeptide is Putative pterin-4-alpha-carbinolamine dehydratase (Nostoc punctiforme (strain ATCC 29133 / PCC 73102)).